A 572-amino-acid polypeptide reads, in one-letter code: Golgi apyrase (572 aa).

Residues 1–470 (MVRKYGIFID…KHWMRLFPNK (470 aa)) lie on the Lumenal side of the membrane. E145 (proton acceptor) is an active-site residue. The helical transmembrane segment at 471-491 (LFFILSFIFCLFFLFSLVLFG) threads the bilayer. Topologically, residues 492–572 (YDPKRRQRFK…RERTPRSPFP (81 aa)) are cytoplasmic.

Belongs to the GDA1/CD39 NTPase family. Requires Ca(2+) as cofactor. Mg(2+) serves as cofactor. Mn(2+) is required as a cofactor.

It is found in the golgi apparatus. The protein resides in the membrane. It carries out the reaction a ribonucleoside 5'-triphosphate + 2 H2O = a ribonucleoside 5'-phosphate + 2 phosphate + 2 H(+). It participates in protein modification; protein glycosylation. In terms of biological role, catalyzes the hydrolysis of phosphoanhydride bonds of nucleoside tri- and di-phosphates. Required for Golgi glycosylation and cell wall integrity. Involved in N-mannosylation of proteins in Golgi. This Schizosaccharomyces pombe (strain 972 / ATCC 24843) (Fission yeast) protein is Golgi apyrase.